We begin with the raw amino-acid sequence, 301 residues long: Thioredoxin-related transmembrane protein 2-A (301 aa).

The first 19 residues, 1–19, serve as a signal peptide directing secretion; sequence MSLIRGLISTIYYLPKIYK. Topologically, residues 20–111 are extracellular; that stretch reads WFYRPYYFLS…VVLFFRVDLR (92 aa). A helical membrane pass occupies residues 112-132; that stretch reads FGLLYLTLCVVFLITCKPPAY. One can recognise a Thioredoxin domain in the interval 122–269; that stretch reads VFLITCKPPA…IFQKYKKFSK (148 aa). The Cytoplasmic segment spans residues 133–301; the sequence is MGPENIKYFR…EEDSESKKDK (169 aa). The interval 268-301 is disordered; it reads SKGEKPEEPQPVLEEESESPLEEEEEDSESKKDK. Over residues 280–295 the composition is skewed to acidic residues; the sequence is LEEESESPLEEEEEDS. The Di-lysine motif signature appears at 298-301; sequence KKDK.

Monomer. Homodimer; disulfide-linked. Occurs in both reduced and oxidized monomeric form. Oxidative conditions increase homodimerization.

Its subcellular location is the endoplasmic reticulum membrane. The protein resides in the mitochondrion membrane. In terms of biological role, endoplasmic reticulum and mitochondria-associated protein that probably functions as a regulator of cellular redox state and thereby regulates protein post-translational modification, protein folding and mitochondrial activity. The chain is Thioredoxin-related transmembrane protein 2-A from Danio rerio (Zebrafish).